Consider the following 187-residue polypeptide: MSKLIYIMGPSGSGKDSLMAEARLRLAAEAPVVFAHRYITRPADAGGENHVALSRAEFQLRLSRGLFALSWESHGFAYGIGREIDIWMESGLSVVVNGSRGALSAALQAYPELLPVLIDVPEHILRERLGARGREDAGEIEARLVRARMAVVEAPELVRFDNSGPLAERGQALAGLILETTISGRKS.

9-16 (GPSGSGKD) lines the ATP pocket.

It belongs to the ribose 1,5-bisphosphokinase family.

It carries out the reaction alpha-D-ribose 1,5-bisphosphate + ATP = 5-phospho-alpha-D-ribose 1-diphosphate + ADP. Its pathway is metabolic intermediate biosynthesis; 5-phospho-alpha-D-ribose 1-diphosphate biosynthesis; 5-phospho-alpha-D-ribose 1-diphosphate from D-ribose 5-phosphate (route II): step 3/3. In terms of biological role, catalyzes the phosphorylation of ribose 1,5-bisphosphate to 5-phospho-D-ribosyl alpha-1-diphosphate (PRPP). In Desulfomicrobium baculatum (strain DSM 4028 / VKM B-1378 / X) (Desulfovibrio baculatus), this protein is Ribose 1,5-bisphosphate phosphokinase PhnN.